The chain runs to 207 residues: ATP-dependent Clp protease proteolytic subunit (207 aa).

Serine 111 serves as the catalytic Nucleophile. Histidine 136 is an active-site residue.

Belongs to the peptidase S14 family. Fourteen ClpP subunits assemble into 2 heptameric rings which stack back to back to give a disk-like structure with a central cavity, resembling the structure of eukaryotic proteasomes.

It is found in the cytoplasm. The enzyme catalyses Hydrolysis of proteins to small peptides in the presence of ATP and magnesium. alpha-casein is the usual test substrate. In the absence of ATP, only oligopeptides shorter than five residues are hydrolyzed (such as succinyl-Leu-Tyr-|-NHMec, and Leu-Tyr-Leu-|-Tyr-Trp, in which cleavage of the -Tyr-|-Leu- and -Tyr-|-Trp bonds also occurs).. Its function is as follows. Cleaves peptides in various proteins in a process that requires ATP hydrolysis. Has a chymotrypsin-like activity. Plays a major role in the degradation of misfolded proteins. The polypeptide is ATP-dependent Clp protease proteolytic subunit (Aliivibrio fischeri (strain ATCC 700601 / ES114) (Vibrio fischeri)).